Reading from the N-terminus, the 120-residue chain is Large ribosomal subunit protein uL18 (120 aa).

This sequence belongs to the universal ribosomal protein uL18 family. As to quaternary structure, part of the 50S ribosomal subunit; part of the 5S rRNA/L5/L18/L25 subcomplex. Contacts the 5S and 23S rRNAs.

Functionally, this is one of the proteins that bind and probably mediate the attachment of the 5S RNA into the large ribosomal subunit, where it forms part of the central protuberance. This is Large ribosomal subunit protein uL18 from Rhizobium etli (strain ATCC 51251 / DSM 11541 / JCM 21823 / NBRC 15573 / CFN 42).